A 304-amino-acid chain; its full sequence is MSHGPTRKHTALPKAQILIEALPWLTRHNGKTVVVKFGGNAMIDEELKAAFAQDIVFLHHAGLKPVVVHGGGPQISAALDRHGIVSEFKAGLRVTTEDAMDVVRMVLAGQVQRELVGLLNQHGPLAVGLTGEDAHTITATKHQPEIDGELVDIGRVGEITEIDTGAIEALLADGRIPVVSSIARSQDDGHVYNVNADTAAAALAAALGAETLMVLTDVEGLYEDWPDSDEVISRLTASELEKLLPELASGMVPKMEGCLHAVRNGVTTARVIDGRVQHSILLEIFTDEGIGTMVVPDEEEGDAV.

Residues 71-72, R93, and N193 each bind substrate; that span reads GG.

The protein belongs to the acetylglutamate kinase family. ArgB subfamily.

The protein localises to the cytoplasm. It catalyses the reaction N-acetyl-L-glutamate + ATP = N-acetyl-L-glutamyl 5-phosphate + ADP. It participates in amino-acid biosynthesis; L-arginine biosynthesis; N(2)-acetyl-L-ornithine from L-glutamate: step 2/4. Catalyzes the ATP-dependent phosphorylation of N-acetyl-L-glutamate. In Streptomyces avermitilis (strain ATCC 31267 / DSM 46492 / JCM 5070 / NBRC 14893 / NCIMB 12804 / NRRL 8165 / MA-4680), this protein is Acetylglutamate kinase.